Reading from the N-terminus, the 596-residue chain is Elongation factor 4 (596 aa).

Residues 2-184 (KHIRNFSIIA…TIVAQIPPPE (183 aa)) enclose the tr-type G domain. GTP-binding positions include 14-19 (DHGKST) and 131-134 (NKID).

Belongs to the TRAFAC class translation factor GTPase superfamily. Classic translation factor GTPase family. LepA subfamily.

It localises to the cell inner membrane. The enzyme catalyses GTP + H2O = GDP + phosphate + H(+). Required for accurate and efficient protein synthesis under certain stress conditions. May act as a fidelity factor of the translation reaction, by catalyzing a one-codon backward translocation of tRNAs on improperly translocated ribosomes. Back-translocation proceeds from a post-translocation (POST) complex to a pre-translocation (PRE) complex, thus giving elongation factor G a second chance to translocate the tRNAs correctly. Binds to ribosomes in a GTP-dependent manner. The protein is Elongation factor 4 of Shewanella loihica (strain ATCC BAA-1088 / PV-4).